Reading from the N-terminus, the 349-residue chain is Selenide, water dikinase (349 aa).

Residue selenocysteine 19 is part of the active site. Selenocysteine 19 is a non-standard amino acid (selenocysteine). Residues lysine 22 and 50–52 (LGD) each bind ATP. Position 53 (aspartate 53) interacts with Mg(2+). Residues aspartate 69, aspartate 92, and 140–142 (GHT) each bind ATP. Aspartate 92 contacts Mg(2+). Residue aspartate 246 participates in Mg(2+) binding.

It belongs to the selenophosphate synthase 1 family. Class I subfamily. As to quaternary structure, homodimer. Mg(2+) is required as a cofactor.

It carries out the reaction hydrogenselenide + ATP + H2O = selenophosphate + AMP + phosphate + 2 H(+). In terms of biological role, synthesizes selenophosphate from selenide and ATP. In Methanocaldococcus jannaschii (strain ATCC 43067 / DSM 2661 / JAL-1 / JCM 10045 / NBRC 100440) (Methanococcus jannaschii), this protein is Selenide, water dikinase.